We begin with the raw amino-acid sequence, 104 residues long: Increased recombination centers protein 13 (104 aa).

A helical transmembrane segment spans residues 63-83 (LVHLFSYVFFLFLLKICVDVL).

It is found in the membrane. In terms of biological role, may be involved in a pathway contributing to genomic integrity. The chain is Increased recombination centers protein 13 (IRC13) from Saccharomyces cerevisiae (strain ATCC 204508 / S288c) (Baker's yeast).